A 410-amino-acid chain; its full sequence is MSETAASGLRLFTSESVTEGHPDKICDAISDTILDALLSVDPHARVAVETVTTTGLVHVVGEVRTSGYVEIPKLVRDKLIEIGFNSSEVGFDGRTCGVSVSIGEQSQEIGAGVDQSHEVRSGENTDADDQAGAGDQGLMFGYATNETATLMPLPIDLAHRLARRLTQVRKTSVVSHLRPDGKTQVTLAYDESGRPVRLDTVVVSTQHDPDVTQEWLFAQIKEHVVDWVLRDSGLESTLDISGYSLLVNPSGSFVVGGPMGDAGLTGRKIIVDTYGGMARHGGGAFSGKDPSKVDRSGAYAMRWVAKNIVAAGLADRAEVQVAYAIGRAKPVGLYVETFGTAKFGLTDEQIQDAVLHVFDLRPAAIIRELDLLRPIYAGTAAYGHFGRDDLKLPWENTDRAEQLRDVLSLG.

H21 is a binding site for ATP. D23 lines the Mg(2+) pocket. Residue E49 coordinates K(+). Residues E62 and Q105 each coordinate L-methionine. Residues 105 to 115 are flexible loop; it reads QSQEIGAGVDQ. Residues 107–133 form a disordered region; the sequence is QEIGAGVDQSHEVRSGENTDADDQAGA. ATP-binding positions include 180–182, D261, 267–268, A284, and K288; these read DGK and RK. Position 261 (D261) interacts with L-methionine. K292 lines the L-methionine pocket.

The protein belongs to the AdoMet synthase family. Homotetramer; dimer of dimers. It depends on Mg(2+) as a cofactor. Requires K(+) as cofactor.

It is found in the cytoplasm. It carries out the reaction L-methionine + ATP + H2O = S-adenosyl-L-methionine + phosphate + diphosphate. It participates in amino-acid biosynthesis; S-adenosyl-L-methionine biosynthesis; S-adenosyl-L-methionine from L-methionine: step 1/1. In terms of biological role, catalyzes the formation of S-adenosylmethionine (AdoMet) from methionine and ATP. The overall synthetic reaction is composed of two sequential steps, AdoMet formation and the subsequent tripolyphosphate hydrolysis which occurs prior to release of AdoMet from the enzyme. The polypeptide is S-adenosylmethionine synthase (Corynebacterium diphtheriae (strain ATCC 700971 / NCTC 13129 / Biotype gravis)).